The following is a 315-amino-acid chain: Cytoplasmic dynein intermediate light chain DYN3 (315 aa).

This sequence belongs to the dynein light intermediate chain DYN3 family. In terms of assembly, the cytoplasmic dynein is composed of at least two heavy chains and a number of intermediate and light chains.

The protein localises to the cytoplasm. The protein resides in the cytoskeleton. Functionally, component of the cytoplasmic dynein which acts as a motor for the intracellular retrograde motility of vesicles and organelles along microtubules. May play an important role in the proper orientation of the mitotic spindle into the budding daughter cell yeast. Probably required for normal progression of the cell cycle. In Candida glabrata (strain ATCC 2001 / BCRC 20586 / JCM 3761 / NBRC 0622 / NRRL Y-65 / CBS 138) (Yeast), this protein is Cytoplasmic dynein intermediate light chain DYN3 (DYN3).